The sequence spans 1063 residues: Presequence protease, mitochondrial (1063 aa).

The transit peptide at 1-33 (MLRLANRVSRKDSGNLGIAQLKKRLLATSGVSQ) directs the protein to the mitochondrion. Histidine 105 is a Zn(2+) binding site. Residue glutamate 108 is the Proton acceptor of the active site. A Zn(2+)-binding site is contributed by histidine 109. Glutamate 181 is a catalytic residue. Glutamate 206 contributes to the Zn(2+) binding site.

This sequence belongs to the peptidase M16 family. PreP subfamily. As to quaternary structure, monomer and homodimer; homodimerization is induced by binding of the substrate. Zn(2+) is required as a cofactor.

Its subcellular location is the mitochondrion intermembrane space. The protein localises to the mitochondrion matrix. In terms of biological role, degrades mitochondrial transit peptides after their cleavage in the intermembrane space or in the matrix, and presequence peptides; clearance of these peptides is required to keep the presequence processing machinery running. Preferentially cleaves the N-terminal side of paired basic amino acid residues. Also degrades other unstructured peptides. May function as an ATP-dependent peptidase as opposed to a metalloendopeptidase. The sequence is that of Presequence protease, mitochondrial (CYM1) from Debaryomyces hansenii (strain ATCC 36239 / CBS 767 / BCRC 21394 / JCM 1990 / NBRC 0083 / IGC 2968) (Yeast).